A 546-amino-acid polypeptide reads, in one-letter code: Apolipoprotein N-acyltransferase 1 (546 aa).

7 helical membrane-spanning segments follow: residues 14–34 (FLLF…PLLP), 41–61 (AYGA…FAVV), 62–82 (FWGG…LFVF), 85–105 (VALC…CLAL), 122–142 (LVWL…PYGV), 151–171 (LPLI…LVVF), and 194–214 (FLSA…LCGF). The region spanning 233–502 (AKVALVQPNG…PGVLVADVPI (270 aa)) is the CN hydrolase domain. E280 acts as the Proton acceptor in catalysis. The active site involves K361. Residue C413 is the Nucleophile of the active site. Residues 514-534 (GDALGVFFCVASLFILIAGGV) traverse the membrane as a helical segment.

Belongs to the CN hydrolase family. Apolipoprotein N-acyltransferase subfamily.

Its subcellular location is the cell inner membrane. The catalysed reaction is N-terminal S-1,2-diacyl-sn-glyceryl-L-cysteinyl-[lipoprotein] + a glycerophospholipid = N-acyl-S-1,2-diacyl-sn-glyceryl-L-cysteinyl-[lipoprotein] + a 2-acyl-sn-glycero-3-phospholipid + H(+). It participates in protein modification; lipoprotein biosynthesis (N-acyl transfer). Functionally, catalyzes the phospholipid dependent N-acylation of the N-terminal cysteine of apolipoprotein, the last step in lipoprotein maturation. The polypeptide is Apolipoprotein N-acyltransferase 1 (Treponema pallidum (strain Nichols)).